The primary structure comprises 479 residues: Ribulose bisphosphate carboxylase large chain (479 aa).

The propeptide occupies 1–2; the sequence is MS. P3 is subject to N-acetylproline. K14 is subject to N6,N6,N6-trimethyllysine. Residues N123 and T173 each contribute to the substrate site. Residue K175 is the Proton acceptor of the active site. K177 contributes to the substrate binding site. Mg(2+)-binding residues include K201, D203, and E204. Residue K201 is modified to N6-carboxylysine. H294 (proton acceptor) is an active-site residue. The substrate site is built by R295, H327, and S379.

The protein belongs to the RuBisCO large chain family. Type I subfamily. Heterohexadecamer of 8 large chains and 8 small chains; disulfide-linked. The disulfide link is formed within the large subunit homodimers. It depends on Mg(2+) as a cofactor. The disulfide bond which can form in the large chain dimeric partners within the hexadecamer appears to be associated with oxidative stress and protein turnover.

It localises to the plastid. It is found in the chloroplast. The enzyme catalyses 2 (2R)-3-phosphoglycerate + 2 H(+) = D-ribulose 1,5-bisphosphate + CO2 + H2O. It catalyses the reaction D-ribulose 1,5-bisphosphate + O2 = 2-phosphoglycolate + (2R)-3-phosphoglycerate + 2 H(+). Functionally, ruBisCO catalyzes two reactions: the carboxylation of D-ribulose 1,5-bisphosphate, the primary event in carbon dioxide fixation, as well as the oxidative fragmentation of the pentose substrate in the photorespiration process. Both reactions occur simultaneously and in competition at the same active site. The protein is Ribulose bisphosphate carboxylase large chain of Ananas comosus (Pineapple).